The primary structure comprises 439 residues: MGKPIVAIVGRPNVGKSTLFNKLAGKRIAIVQDTPGVTRDRIYAEAEWLNYKFTMIDTGGIEPESEDIIVSQMRRQAQIAIEMANVIIFLVDGKEGLAPADEEVAQMLRKSKKPVVLVVNKIDKLKDENNAYEFYNLGIGDPVTISSSQALGLGDMLDRVVEYFKDDELDGEEDERINIAFIGKPNVGKSSLINKLLGEERLIVSDIPGTTRDSIDSYVDTEFGEFTLIDTAGLRRKSKVKEEIERYSVIRTYASIERADVCILMIDATEGISEQDQKIIGYAHDINKAILVIVNKWDLVEKDDKTMDKFKKELKVNLSFMPYAKYLFISAKTGQRVVKVLQTAKECYDNYTKRVKTGVLNDVISQAIMMKEPPIVGTKRLKIYYVTQIGTKPPTFIFFVNDPACIHFSYQRYLENQLRENFDFQGTGIKLEFRERKEK.

2 consecutive EngA-type G domains span residues Pro4–Glu168 and Ile177–Thr352. Residues Gly10–Ser17, Asp57–Ile61, Asn120–Asp123, Gly183–Ser190, Asp230–Leu234, and Asn295–Asp298 contribute to the GTP site. Positions Lys353–Lys437 constitute a KH-like domain.

The protein belongs to the TRAFAC class TrmE-Era-EngA-EngB-Septin-like GTPase superfamily. EngA (Der) GTPase family. As to quaternary structure, associates with the 50S ribosomal subunit.

Functionally, GTPase that plays an essential role in the late steps of ribosome biogenesis. The sequence is that of GTPase Der from Clostridium botulinum (strain Okra / Type B1).